The sequence spans 161 residues: MNELRRRWQVMSQRERLMALACGGLVVLCLLYYLIWAPWQESVRQWQMTVERERQTVRWMQQQPPRFRRRKVRGGRXPVAISANGIGAQSAVRYGITVLRMQPQESQVSVTLARSDFNNLLHWLAELEQKNGVITQGIDVTAVPNSPGIVEVTRLSLERVL.

Over 1 to 16 (MNELRRRWQVMSQRER) the chain is Cytoplasmic. A helical membrane pass occupies residues 17-37 (LMALACGGLVVLCLLYYLIWA). Residues 38–161 (PWQESVRQWQ…VTRLSLERVL (124 aa)) are Periplasmic-facing.

It belongs to the GSP M family. As to quaternary structure, type II secretion system is composed of four main components: the outer membrane complex, the inner membrane complex, the cytoplasmic secretion ATPase and the periplasm-spanning pseudopilus. Forms homodimers. Interacts with OutL/GspL. Interacts with OutE/GspE and OutF/GspF.

Its subcellular location is the cell inner membrane. Inner membrane component of the type II secretion system required for the energy-dependent secretion of extracellular factors such as proteases and toxins from the periplasm. Plays a role in the complex assembly and recruits OutL resulting in a stable complex in the inner membrane. Provides thus a link between the energy-providing OutE protein in the cytoplasm and the rest of the T2SS machinery. In Dickeya chrysanthemi (Pectobacterium chrysanthemi), this protein is Type II secretion system protein M (outM).